A 912-amino-acid polypeptide reads, in one-letter code: MCRIAGTPPRILPPLALMLLAALQQAPIKATCEDMLCKMGFPEDVHSAVVSRSVHGGQPLLNVRFQSCDENRKIYFGSSEPEDFRVGEDGVVYAERSFQLSAEPTEFVVSARDKETQEEWQMKVKLTPEPAFTGASEKDQKKIEDIIFPWQQYKDSSHLKRQKRDWVIPPINLPENSRGPFPQELVRIRSDRDKSLSLRYSVTGPGADQPPTGIFIINPISGQLSVTKPLDREQIASFHLRAHAVDVNGNQVENPIDIVINVIDMNDNRPEFLHQVWNGTVPEGSKPGTYVMTVTAIDADDPNAQNGMLRYRILSQAPSSPSPNMFTINNETGDIITVAAGLDREKVQQYTLIIQATDMEGNPTYGLSNTATAVITVTDVNDNPPEFTAMTFYGEVPENRVDVIVANLTVTDKDQPHTPAWNARYQMTGGDPTGQFTILTDPNSNDGLVTVVKPIDFETNRMFVLTVAAENQVPLAKGIQHPPQSTATVSITVIDVNESPYFVPNPKLVRQEEGLLAGSMLTTFTARDPDRYMQQTSLRYSKLSDPANWLKIDPVNGQITTTAVLDRESIYVQNNMYNATFLASDNGIPPMSGTGTLQIYLLDINDNAPQVNPKEATTCETLQPNAINITAVDPDIDPNAGPFAFELPDSPPSIKRNWTIVRISGDHAQLSLRIRFLEAGIYDVPIVITDSGNPHASSTSVLKVKVCQCDINGDCTDVDRIVGAGLGTGAIIAILLCIIILLILVLMFVVWMKRRDKERQAKQLLIDPEDDVRDNILKYDEEGGGEEDQDYDLSQLQQPDTVEPDAIKPVGIRRLDERPIHAEPQYPVRSAAPHPGDIGDFINEGLKAADNDPTAPPYDSLLVFDYEGSGSTAGSLSSLNSSSSGGEQDYDYLNDWGPRFKKLADMYGGGDD.

The first 28 residues, 1–28, serve as a signal peptide directing secretion; sequence MCRIAGTPPRILPPLALMLLAALQQAPI. Positions 29 to 164 are excised as a propeptide; that stretch reads KATCEDMLCK…DSSHLKRQKR (136 aa). Cadherin domains are found at residues 165–272, 273–387, 388–502, 503–609, and 610–720; these read DWVI…RPEF, LHQV…PPEF, TAMT…SPYF, VPNP…DNAP, and QVNP…DVDR. At 165–729 the chain is on the extracellular side; sequence DWVIPPINLP…RIVGAGLGTG (565 aa). Ca(2+) contacts are provided by Glu175, Asp231, Glu233, Asp264, Met265, Asn266, Asp267, and Asn268. N-linked (GlcNAc...) asparagine glycosylation is present at Asn278. Ca(2+) is bound by residues Asp298, Asp300, and Asn306. Asn330 carries an N-linked (GlcNAc...) asparagine glycan. Asp358 contacts Ca(2+). Residues Asn407, Asn578, Asn628, and Asn657 are each glycosylated (N-linked (GlcNAc...) asparagine). A helical transmembrane segment spans residues 730–752; it reads AIIAILLCIIILLILVLMFVVWM. The Cytoplasmic portion of the chain corresponds to 753–912; it reads KRRDKERQAK…LADMYGGGDD (160 aa). A compositionally biased stretch (low complexity) spans 869-886; sequence SGSTAGSLSSLNSSSSGG. The interval 869–890 is disordered; the sequence is SGSTAGSLSSLNSSSSGGEQDY.

As to quaternary structure, homodimer (via extracellular region). Can also form heterodimers with other cadherins (via extracellular region). Dimerization occurs in trans, i.e. with a cadherin chain from another cell. Interacts with CTNNA2. Expressed at intercalated disks in the heart (at protein level).

The protein resides in the cell membrane. Its subcellular location is the sarcolemma. It localises to the cell junction. It is found in the cell surface. The protein localises to the desmosome. The protein resides in the adherens junction. In terms of biological role, calcium-dependent cell adhesion protein; preferentially mediates homotypic cell-cell adhesion. Cadherins may thus contribute to the sorting of heterogeneous cell types, and thereby play an important role during embryonic development. Required for proper neurite branching, and pre- and postsynaptic organization. In Gallus gallus (Chicken), this protein is Cadherin-2 (CDH2).